A 283-amino-acid chain; its full sequence is Elongation factor Ts (283 aa).

Residues 80 to 83 (TDFV) form an involved in Mg(2+) ion dislocation from EF-Tu region.

Belongs to the EF-Ts family.

It is found in the cytoplasm. Associates with the EF-Tu.GDP complex and induces the exchange of GDP to GTP. It remains bound to the aminoacyl-tRNA.EF-Tu.GTP complex up to the GTP hydrolysis stage on the ribosome. This is Elongation factor Ts from Haemophilus ducreyi (strain 35000HP / ATCC 700724).